The primary structure comprises 312 residues: Protein dif-1 (312 aa).

Solcar repeat units lie at residues 2 to 93 (SDVL…GKWL), 102 to 193 (MTFI…LKKK), and 203 to 289 (LSPG…TLAA). 6 helical membrane passes run 5 to 25 (LLNF…GHPF), 69 to 89 (MAAP…GCAV), 104 to 124 (FIQN…VMVP), 172 to 192 (TLLR…YLKK), 209 to 229 (LMAG…ADVL), and 261 to 282 (LFKG…CFFG).

Belongs to the mitochondrial carrier (TC 2.A.29) family.

The protein localises to the mitochondrion inner membrane. Its function is as follows. Seems to play a role in the maintenance of tissue differentiation in the developing embryo, but not for its initiation. In Caenorhabditis elegans, this protein is Protein dif-1 (dif-1).